Consider the following 527-residue polypeptide: Peptide chain release factor 3 (527 aa).

A tr-type G domain is found at 11 to 278 (AKRRTFAIIS…GFVEWAPAPL (268 aa)). GTP contacts are provided by residues 20–27 (SHPDAGKT), 87–91 (DTPGH), and 141–144 (NKMD).

It belongs to the TRAFAC class translation factor GTPase superfamily. Classic translation factor GTPase family. PrfC subfamily.

Its subcellular location is the cytoplasm. Functionally, increases the formation of ribosomal termination complexes and stimulates activities of RF-1 and RF-2. It binds guanine nucleotides and has strong preference for UGA stop codons. It may interact directly with the ribosome. The stimulation of RF-1 and RF-2 is significantly reduced by GTP and GDP, but not by GMP. The chain is Peptide chain release factor 3 from Teredinibacter turnerae (strain ATCC 39867 / T7901).